A 429-amino-acid chain; its full sequence is Adenylosuccinate synthetase (429 aa).

Residues 12 to 18 and 40 to 42 contribute to the GTP site; these read GDEGKGK and GHT. The Proton acceptor role is filled by D13. Mg(2+)-binding residues include D13 and G40. IMP-binding positions include 13–16, 38–41, T128, R142, Q224, T239, and R303; these read DEGK and NAGH. The Proton donor role is filled by H41. 299–305 serves as a coordination point for substrate; sequence VTTGRPR. Residues R305, 331–333, and 413–415 contribute to the GTP site; these read LLD and SVG.

It belongs to the adenylosuccinate synthetase family. In terms of assembly, homodimer. Mg(2+) serves as cofactor.

The protein localises to the cytoplasm. The catalysed reaction is IMP + L-aspartate + GTP = N(6)-(1,2-dicarboxyethyl)-AMP + GDP + phosphate + 2 H(+). The protein operates within purine metabolism; AMP biosynthesis via de novo pathway; AMP from IMP: step 1/2. Functionally, plays an important role in the de novo pathway of purine nucleotide biosynthesis. Catalyzes the first committed step in the biosynthesis of AMP from IMP. The sequence is that of Adenylosuccinate synthetase from Clostridioides difficile (strain 630) (Peptoclostridium difficile).